Consider the following 689-residue polypeptide: Glycine--tRNA ligase beta subunit (689 aa).

This sequence belongs to the class-II aminoacyl-tRNA synthetase family. Tetramer of two alpha and two beta subunits.

Its subcellular location is the cytoplasm. It catalyses the reaction tRNA(Gly) + glycine + ATP = glycyl-tRNA(Gly) + AMP + diphosphate. In Acinetobacter baumannii (strain AB307-0294), this protein is Glycine--tRNA ligase beta subunit.